A 299-amino-acid polypeptide reads, in one-letter code: Hydroxymethylglutaryl-CoA lyase YngG (299 aa).

The 268-residue stretch at 7–274 folds into the Pyruvate carboxyltransferase domain; that stretch reads VTIKEVGPRD…KTNVKLEKLL (268 aa). Arg15 lines the substrate pocket. Residues Asp16, His207, and His209 each contribute to the a divalent metal cation site. Residue Cys240 is part of the active site. Asn249 serves as a coordination point for a divalent metal cation.

The protein belongs to the HMG-CoA lyase family. In terms of assembly, homodimer and homotetramer.

The catalysed reaction is (3S)-3-hydroxy-3-methylglutaryl-CoA = acetoacetate + acetyl-CoA. It functions in the pathway metabolic intermediate metabolism; (S)-3-hydroxy-3-methylglutaryl-CoA degradation; acetoacetate from (S)-3-hydroxy-3-methylglutaryl-CoA: step 1/1. Its function is as follows. Involved in the catabolism of branched amino acids such as leucine. The chain is Hydroxymethylglutaryl-CoA lyase YngG (yngG) from Bacillus subtilis (strain 168).